The following is a 560-amino-acid chain: Potassium-transporting ATPase potassium-binding subunit (560 aa).

The next 12 membrane-spanning stretches (helical) occupy residues 6-26, 63-83, 132-152, 175-195, 250-270, 282-302, 327-347, 356-376, 379-399, 416-436, 483-503, and 524-544; these read FLLI…LGSL, LLAI…ILMC, GLAV…FALI, LWVL…QGAI, LTNV…CFAF, AILW…MWAE, FGIL…CGAV, ALGG…FGGV, GLYG…LMIG, MTAL…ALAM, LLLA…VMAI, and GALF…LTFI.

The protein belongs to the KdpA family. In terms of assembly, the system is composed of three essential subunits: KdpA, KdpB and KdpC.

The protein localises to the cell inner membrane. Part of the high-affinity ATP-driven potassium transport (or Kdp) system, which catalyzes the hydrolysis of ATP coupled with the electrogenic transport of potassium into the cytoplasm. This subunit binds the periplasmic potassium ions and delivers the ions to the membrane domain of KdpB through an intramembrane tunnel. The sequence is that of Potassium-transporting ATPase potassium-binding subunit from Cronobacter sakazakii (strain ATCC BAA-894) (Enterobacter sakazakii).